The following is a 245-amino-acid chain: TPR repeat-containing protein PA4299 (245 aa).

The first 16 residues, 1–16 (MKALIGIGLCAALLGG), serve as a signal peptide directing secretion. Cysteine 17 carries the N-palmitoyl cysteine lipid modification. A lipid anchor (S-diacylglycerol cysteine) is attached at cysteine 17. 3 TPR repeats span residues 100–133 (PEAH…RPTE), 135–167 (RFRN…QQGG), and 169–200 (LPAT…DARD). A disordered region spans residues 210-245 (SWGAVPTPGAAPASDDPLAELPAEANMHTAMANEAP).

The protein resides in the cell membrane. The sequence is that of TPR repeat-containing protein PA4299 from Pseudomonas aeruginosa (strain ATCC 15692 / DSM 22644 / CIP 104116 / JCM 14847 / LMG 12228 / 1C / PRS 101 / PAO1).